The sequence spans 313 residues: Ribosomal protein L11 methyltransferase (313 aa).

4 residues coordinate S-adenosyl-L-methionine: T164, G185, D207, and N249.

It belongs to the methyltransferase superfamily. PrmA family.

It is found in the cytoplasm. The enzyme catalyses L-lysyl-[protein] + 3 S-adenosyl-L-methionine = N(6),N(6),N(6)-trimethyl-L-lysyl-[protein] + 3 S-adenosyl-L-homocysteine + 3 H(+). Methylates ribosomal protein L11. The sequence is that of Ribosomal protein L11 methyltransferase from Clostridium botulinum (strain Eklund 17B / Type B).